A 169-amino-acid chain; its full sequence is Ureidoglycolate lyase (169 aa).

Belongs to the ureidoglycolate lyase family. In terms of assembly, homodimer. The cofactor is Ni(2+).

It carries out the reaction (S)-ureidoglycolate = urea + glyoxylate. It participates in nitrogen metabolism; (S)-allantoin degradation. Catalyzes the catabolism of the allantoin degradation intermediate (S)-ureidoglycolate, generating urea and glyoxylate. Involved in the utilization of allantoin as nitrogen source. This is Ureidoglycolate lyase from Brucella abortus biovar 1 (strain 9-941).